Consider the following 435-residue polypeptide: Serine--tRNA ligase (435 aa).

Residue Thr-242–Glu-244 participates in L-serine binding. Residue Arg-273–Glu-275 participates in ATP binding. Glu-296 contacts L-serine. Residue Glu-360–Ser-363 coordinates ATP. Ser-396 lines the L-serine pocket.

The protein belongs to the class-II aminoacyl-tRNA synthetase family. Type-1 seryl-tRNA synthetase subfamily. Homodimer. The tRNA molecule binds across the dimer.

Its subcellular location is the cytoplasm. It catalyses the reaction tRNA(Ser) + L-serine + ATP = L-seryl-tRNA(Ser) + AMP + diphosphate + H(+). The enzyme catalyses tRNA(Sec) + L-serine + ATP = L-seryl-tRNA(Sec) + AMP + diphosphate + H(+). It participates in aminoacyl-tRNA biosynthesis; selenocysteinyl-tRNA(Sec) biosynthesis; L-seryl-tRNA(Sec) from L-serine and tRNA(Sec): step 1/1. In terms of biological role, catalyzes the attachment of serine to tRNA(Ser). Is also able to aminoacylate tRNA(Sec) with serine, to form the misacylated tRNA L-seryl-tRNA(Sec), which will be further converted into selenocysteinyl-tRNA(Sec). This chain is Serine--tRNA ligase, found in Vibrio cholerae serotype O1 (strain ATCC 39541 / Classical Ogawa 395 / O395).